Consider the following 281-residue polypeptide: Sorbose reductase SOU1 (281 aa).

Isoleucine 47, lysine 74, and asparagine 119 together coordinate NADP(+). Residues serine 173 and tyrosine 188 each act as proton donor in the active site. Residues tyrosine 188, lysine 192, isoleucine 221, and threonine 223 each coordinate NADP(+). Lysine 192 serves as the catalytic Lowers pKa of active site Tyr.

The protein belongs to the short-chain dehydrogenases/reductases (SDR) family. Homotetramer.

The catalysed reaction is D-sorbitol + NADP(+) = keto-L-sorbose + NADPH + H(+). The protein operates within carbohydrate degradation; L-sorbose degradation. Functionally, catalyzes the NADP dependent reduction of L-sorbose to D-glucitol. Can also convert fructose to mannitol, but less efficiently. The chain is Sorbose reductase SOU1 (SOU1) from Candida albicans (strain SC5314 / ATCC MYA-2876) (Yeast).